The following is a 113-amino-acid chain: Mitochondrial import inner membrane translocase subunit tim16 (113 aa).

The segment at 56 to 108 (KILGLENVETVSKEDIDKKYNELLTINDPKDGGSEYLQIKISGAKHCLHSALK) is J-like.

Belongs to the TIM16/PAM16 family. As to quaternary structure, probable component of the PAM complex at least composed of a mitochondrial HSP70 protein, grepE, tim16 and tim14. Associates with the TIM23 complex.

It is found in the mitochondrion inner membrane. Functionally, regulates ATP-dependent protein translocation into the mitochondrial matrix. The protein is Mitochondrial import inner membrane translocase subunit tim16 (timm16) of Dictyostelium discoideum (Social amoeba).